A 219-amino-acid polypeptide reads, in one-letter code: Small ribosomal subunit protein eS1 (219 aa).

This sequence belongs to the eukaryotic ribosomal protein eS1 family. Component of the small ribosomal subunit. Mature ribosomes consist of a small (40S) and a large (60S) subunit. The 40S subunit contains about 33 different proteins and 1 molecule of RNA (18S). The 60S subunit contains about 49 different proteins and 3 molecules of RNA (25S, 5.8S and 5S).

Its subcellular location is the cytoplasm. In Guillardia theta (Cryptophyte), this protein is Small ribosomal subunit protein eS1.